The sequence spans 368 residues: D-Ala-D/L-Ala epimerase (368 aa).

Substrate contacts are provided by residues threonine 135 and 160–162 (KVK). The Mg(2+) site is built by aspartate 190, glutamate 216, and aspartate 241. Residues lysine 265 and 318–320 (DFD) contribute to the substrate site.

The protein belongs to the mandelate racemase/muconate lactonizing enzyme family. Mg(2+) serves as cofactor.

Catalyzes the epimerization of D-Ala-D-Ala to D-Ala-L-Ala. Has broad substrate specificity and catalyzes the epimerization of a variety of dipeptides containing an N-terminal Ala followed by a hydrophobic or polar residue, such as Val, Ser and Met (in vitro). In Cytophaga hutchinsonii (strain ATCC 33406 / DSM 1761 / CIP 103989 / NBRC 15051 / NCIMB 9469 / D465), this protein is D-Ala-D/L-Ala epimerase (tfdD).